We begin with the raw amino-acid sequence, 525 residues long: MTTNIHQHRILILDFGSQYTQLIARRIREIGVYCELWAWDVTEEQIREFNPSGIILSGGPESTTAQGSPRAPEYVFNAGVPVLGVCYGMQTMSVQFGGKVEDSTEREFGYAQVEIKAESALFRGIQDSLNEQGKPSLDVWMSHGDKVTAIPEDFITIASTDTCPFAIIANEEKRFYGVQFHPEVTHTHQGQRILERFVLDVCQCEALWTPASIIEDTVVRLREQVGEDHVILGLSGGVDSSVTALLLHRAIGNRLTCVFVDNGLLRLNEATQVMEMFAGKFGLNIVHVPAEDRFLTALAGINDPEEKRKTIGRVFVEVFDEEASKQAQVKWLAQGTIYPDVIESAASATGKAHVIKSHHNVGGLPEEMKLGLVEPLKELFKDEVRKIGLELGLPYDMLNRHPFPGPGLGVRVLGEVKKEYCDLLRQADAIFIEELHKADLYNKVSQAFTVFLPVRSVGVMGDGRKYDWVVSLRAVETIDFMTAHWAHLPYDFLGRVSNRIINEVNGISRVVYDVSGKPPATIEWE.

One can recognise a Glutamine amidotransferase type-1 domain in the interval 9–207 (RILILDFGSQ…VLDVCQCEAL (199 aa)). Cys-86 acts as the Nucleophile in catalysis. Residues His-181 and Glu-183 contribute to the active site. Residues 208–400 (WTPASIIEDT…LGLPYDMLNR (193 aa)) enclose the GMPS ATP-PPase domain. 235–241 (SGGVDSS) lines the ATP pocket.

In terms of assembly, homodimer.

The enzyme catalyses XMP + L-glutamine + ATP + H2O = GMP + L-glutamate + AMP + diphosphate + 2 H(+). The protein operates within purine metabolism; GMP biosynthesis; GMP from XMP (L-Gln route): step 1/1. Its function is as follows. Catalyzes the synthesis of GMP from XMP. In Photorhabdus laumondii subsp. laumondii (strain DSM 15139 / CIP 105565 / TT01) (Photorhabdus luminescens subsp. laumondii), this protein is GMP synthase [glutamine-hydrolyzing].